The primary structure comprises 493 residues: MLGSGLILVAILAYLSVMVLVFVWKQKFRGKLPPGPTPLPYIGNYLQLNTKDIYSSITELSERYGPVFTIYLGPRPVVVLYGYDAVKEALVDQAEEFSGRGEQATYNTLFKDYGVAFSSGERAKQLRRFSIATLRDFGVGKRGVEERIQEEAAYLIKMLRSTRGAPIDPNDYLSQTVSNVISSVVFGDAFDYEDKEFLELLHMMNEMNKFAASPVGQLYDMFHSVMKYLPGPQQQIIKNTKELEDFMIRKVKQNQSTLDLNSARNFIDSFLIHMHEEKKNPTSEFNIKNLVMTSLNLFFAGSETVSSTIRYGFLLLMKYPEVEAKVHEEIDRVIGRNRQPQFEDRMKMPYTEAVINEIQRFANLAPLGIPRKTIKNTTFRGFFLPKDTDVYPILGSLLTDPKFFTSPKHFNPQNFLDDRGQLKKIAAFVPFSVGKRFCLGDGLARMELFLFLTTILQNFRLKFPKKLEDIDASPKPLGFSRIIPRYTMSFLPI.

Heme is bound at residue Cys-438.

Belongs to the cytochrome P450 family. Heme serves as cofactor. As to expression, liver.

The protein resides in the endoplasmic reticulum membrane. The protein localises to the microsome membrane. The catalysed reaction is an organic molecule + reduced [NADPH--hemoprotein reductase] + O2 = an alcohol + oxidized [NADPH--hemoprotein reductase] + H2O + H(+). Cytochromes P450 are a group of heme-thiolate monooxygenases. In liver microsomes, this enzyme is involved in an NADPH-dependent electron transport pathway. It oxidizes a variety of structurally unrelated compounds, including steroids, fatty acids, and xenobiotics. The sequence is that of Cytochrome P450 2A9 (CYP2A9) from Mesocricetus auratus (Golden hamster).